The sequence spans 280 residues: Energy-coupling factor transporter ATP-binding protein EcfA2 (280 aa).

An ABC transporter domain is found at 3-245; the sequence is ISLENVSYTY…VAFLKEKQLG (243 aa). 40-47 lines the ATP pocket; that stretch reads GHTGSGKS.

It belongs to the ABC transporter superfamily. Energy-coupling factor EcfA family. In terms of assembly, forms a stable energy-coupling factor (ECF) transporter complex composed of 2 membrane-embedded substrate-binding proteins (S component), 2 ATP-binding proteins (A component) and 2 transmembrane proteins (T component).

It is found in the cell membrane. Its function is as follows. ATP-binding (A) component of a common energy-coupling factor (ECF) ABC-transporter complex. Unlike classic ABC transporters this ECF transporter provides the energy necessary to transport a number of different substrates. The chain is Energy-coupling factor transporter ATP-binding protein EcfA2 from Streptococcus thermophilus (strain CNRZ 1066).